The chain runs to 293 residues: Ribonuclease HIII (293 aa).

Residues Leu-78 to Arg-293 form the RNase H type-2 domain. Residues Asp-84, Glu-85, and Asp-187 each contribute to the a divalent metal cation site.

Belongs to the RNase HII family. RnhC subfamily. It depends on Mn(2+) as a cofactor. Requires Mg(2+) as cofactor.

It localises to the cytoplasm. The catalysed reaction is Endonucleolytic cleavage to 5'-phosphomonoester.. In terms of biological role, endonuclease that specifically degrades the RNA of RNA-DNA hybrids. This is Ribonuclease HIII from Streptococcus pneumoniae (strain JJA).